Here is a 435-residue protein sequence, read N- to C-terminus: Tektin-4 (435 aa).

Basic and acidic residues predominate over residues 60–69 (DQSERQRHES). Residues 60–96 (DQSERQRHESQQLATETQALAQRTQQDSTRTVGERLQ) are disordered. The segment covering 70 to 85 (QQLATETQALAQRTQQ) has biased composition (low complexity). Coiled-coil stretches lie at residues 102 to 180 (KSEL…LLKR), 310 to 336 (LHKT…DKEA), and 363 to 411 (FRLL…TNSL).

Belongs to the tektin family. As to quaternary structure, microtubule inner protein component of sperm flagellar doublet microtubules. In terms of processing, ubiquitinated, leading to its degradation. Deubiquitinated by USP16, promoting its stability. Strongly expressed in spermatozoa. Also detected at low levels in pancreas. Expressed in airway epithelial cells.

It localises to the cytoplasm. Its subcellular location is the cytoskeleton. It is found in the cilium axoneme. The protein localises to the flagellum axoneme. Functionally, microtubule inner protein (MIP) part of the dynein-decorated doublet microtubules (DMTs) in cilia and flagellar axoneme. Forms filamentous polymers in the walls of ciliary and flagellar microtubules. Contributes to normal sperm motility. The chain is Tektin-4 from Homo sapiens (Human).